Consider the following 497-residue polypeptide: Cytochrome P450 71A16 (497 aa).

Residues 1–21 traverse the membrane as a helical segment; the sequence is MEMMILISLCLTTFLTILLFF. Residue C439 participates in heme binding.

It belongs to the cytochrome P450 family. It depends on heme as a cofactor.

The protein localises to the membrane. Its function is as follows. Possesses triterpene oxidizing activity. Catalyzes the C23 hydroxylation of marneral to form 23-hydroxymarneral. Catalyzes the C23 hydroxylation of marnerol to form 23-hydroxymarnerol. The sequence is that of Cytochrome P450 71A16 (CYP71A16) from Arabidopsis thaliana (Mouse-ear cress).